Reading from the N-terminus, the 930-residue chain is Semaphorin-6C (930 aa).

An N-terminal signal peptide occupies residues 1 to 24; sequence MPRAPHFMPLLLLLLLLSLPHTQA. At 25-604 the chain is on the extracellular side; that stretch reads AFPQDPLPLL…ASASRSVPIP (580 aa). One can recognise a Sema domain in the interval 30–516; that stretch reads PLPLLISDLQ…FSGCIVYLPL (487 aa). Residue asparagine 70 is glycosylated (N-linked (GlcNAc...) asparagine). 4 disulfides stabilise this stretch: cysteine 111–cysteine 121, cysteine 139–cysteine 148, cysteine 262–cysteine 373, and cysteine 287–cysteine 332. N-linked (GlcNAc...) asparagine glycosylation is present at asparagine 286. N-linked (GlcNAc...) asparagine glycosylation is present at asparagine 437. 4 cysteine pairs are disulfide-bonded: cysteine 479–cysteine 510, cysteine 519–cysteine 537, cysteine 525–cysteine 570, and cysteine 529–cysteine 545. Residues 554-593 are disordered; it reads TDVDQAGNQESMEHGDCQDGATGSQSGPGDSAYGVRRDLP. A helical transmembrane segment spans residues 605-625; that stretch reads LLLASVAAAFALGASVSGLLV. The Cytoplasmic portion of the chain corresponds to 626–930; the sequence is SCACRRAHRR…AVPNGGRFNF (305 aa). 4 disordered regions span residues 654–674, 716–761, 775–882, and 908–930; these read LARLHGGGPEPPPPSKDGDAV, GDPW…PGQA, HGPQ…PGKH, and SLKPPLVGPSSRQAVPNGGRFNF. Low complexity predominate over residues 829 to 844; sequence ASAPARPALSAPAPRL.

The protein belongs to the semaphorin family. In terms of tissue distribution, in adult tissues, expressed only in skeletal muscle.

It is found in the cell membrane. In terms of biological role, shows growth cone collapsing activity on dorsal root ganglion (DRG) neurons in vitro. May be a stop signal for the DRG neurons in their target areas, and possibly also for other neurons. May also be involved in the maintenance and remodeling of neuronal connections. The polypeptide is Semaphorin-6C (SEMA6C) (Homo sapiens (Human)).